The primary structure comprises 478 residues: Phosphatidylinositol 4-kinase type 2-alpha (478 aa).

The residue at position 1 (methionine 1) is an N-acetylmethionine. A disordered region spans residues 1–57; that stretch reads MDETSPLVSPERAQPPEYTFPSVSGAHFPQVPGGAVRVAAAGSGPSPPCSPGHDRER. 5 positions are modified to phosphoserine: serine 5, serine 9, serine 43, serine 46, and serine 50. The segment covering 31 to 44 has biased composition (low complexity); the sequence is VPGGAVRVAAAGSG. The PI3K/PI4K catalytic domain occupies 123–452; it reads SIYPERIYQG…VQMPPVIVET (330 aa). The tract at residues 129-135 is G-loop; it reads IYQGSSG. ATP-binding positions include 130–136 and lysine 151; that span reads YQGSSGS. The important for substrate binding stretch occupies residues 156–158; the sequence is EPY. Residues 164-177 form an important for interaction with membranes region; it reads KWTKWLQKLCCPCC. Residues cysteine 173, cysteine 174, cysteine 176, and cysteine 177 are each lipidated (S-palmitoyl cysteine). ATP is bound at residue 260–263; sequence QLFV. The tract at residues 267–275 is important for interaction with membranes; it reads KDADYWLRR. The tract at residues 304 to 312 is catalytic loop; that stretch reads RNTDRGNDN. Residues 343 to 363 are activation loop; that stretch reads AIDNGLAFPLKHPDSWRAYPF. Aspartate 345 is a binding site for ATP. The important for interaction with membranes stretch occupies residues 358 to 367; it reads WRAYPFYWAW. Phosphoserine is present on serine 461.

It belongs to the PI3/PI4-kinase family. Type II PI4K subfamily. In terms of assembly, associates with the BLOC-1 and the AP-3 complexes; the BLOC-1 complex is required for optimal binding of PI4K2A to the AP-3 complex. Interacts with BLOC1S5 and DTNBP1. Interacts with FOS; this interaction may enhance phosphatidylinositol phosphorylation activity. Interacts with ITCH. Interacts with ATG9A. Post-translationally, ubiquitinated by ITCH; this does not lead to proteasomal degradation. Palmitoylated. Palmitoylated by ZDHHC3 and ZDHHC7 in the CCPCC motif. Palmitoylation is cholesterol-dependent, and required for TGN localization. Detected in adult brain, especially in neurons in the cerebellum, brain cortex, dorsal root ganglion and spinal cord (at protein level).

It localises to the golgi apparatus. The protein localises to the trans-Golgi network membrane. The protein resides in the membrane raft. It is found in the endosome. Its subcellular location is the endosome membrane. It localises to the cytoplasmic vesicle. The protein localises to the cell projection. The protein resides in the dendrite. It is found in the presynaptic cell membrane. Its subcellular location is the synapse. It localises to the synaptosome. The protein localises to the mitochondrion. The protein resides in the membrane. It is found in the cell membrane. Its subcellular location is the perikaryon. It localises to the neuron projection. The catalysed reaction is a 1,2-diacyl-sn-glycero-3-phospho-(1D-myo-inositol) + ATP = a 1,2-diacyl-sn-glycero-3-phospho-(1D-myo-inositol 4-phosphate) + ADP + H(+). Functionally, membrane-bound phosphatidylinositol-4 kinase (PI4-kinase) that catalyzes the phosphorylation of phosphatidylinositol (PI) to phosphatidylinositol 4-phosphate (PI4P), a lipid that plays important roles in endocytosis, Golgi function, protein sorting and membrane trafficking and is required for prolonged survival of neurons. Besides, phosphorylation of phosphatidylinositol (PI) to phosphatidylinositol 4-phosphate (PI4P) is the first committed step in the generation of phosphatidylinositol 4,5-bisphosphate (PIP2), a precursor of the second messenger inositol 1,4,5-trisphosphate (InsP3). This Rattus norvegicus (Rat) protein is Phosphatidylinositol 4-kinase type 2-alpha (Pi4k2a).